A 641-amino-acid chain; its full sequence is Mannosyl-oligosaccharide 1,2-alpha-mannosidase IB (641 aa).

The residue at position 2 (threonine 2) is an N-acetylthreonine. Residues 2–36 are Cytoplasmic-facing; it reads TTPALLPLSGRRIPPLNLGPPSFPHHRATLRLSEK. A helical; Signal-anchor for type II membrane protein membrane pass occupies residues 37–57; it reads FILLLILSAFITLCFGAFFFL. At 58–641 the chain is on the lumenal side; sequence PDSSKHKRFD…STLSGNPAVR (584 aa). Cysteine 462 and cysteine 494 are oxidised to a cystine. Glutamate 508 acts as the Proton donor in catalysis. Residue threonine 619 coordinates Ca(2+). Asparagine 631 carries an N-linked (GlcNAc...) asparagine glycan.

The protein belongs to the glycosyl hydrolase 47 family. The cofactor is Ca(2+).

The protein resides in the golgi apparatus membrane. It catalyses the reaction N(4)-(alpha-D-Man-(1-&gt;2)-alpha-D-Man-(1-&gt;2)-alpha-D-Man-(1-&gt;3)-[alpha-D-Man-(1-&gt;2)-alpha-D-Man-(1-&gt;3)-[alpha-D-Man-(1-&gt;2)-alpha-D-Man-(1-&gt;6)]-alpha-D-Man-(1-&gt;6)]-beta-D-Man-(1-&gt;4)-beta-D-GlcNAc-(1-&gt;4)-beta-D-GlcNAc)-L-asparaginyl-[protein] (N-glucan mannose isomer 9A1,2,3B1,2,3) + 4 H2O = N(4)-(alpha-D-Man-(1-&gt;3)-[alpha-D-Man-(1-&gt;3)-[alpha-D-Man-(1-&gt;6)]-alpha-D-Man-(1-&gt;6)]-beta-D-Man-(1-&gt;4)-beta-D-GlcNAc-(1-&gt;4)-beta-D-GlcNAc)-L-asparaginyl-[protein] (N-glucan mannose isomer 5A1,2) + 4 beta-D-mannose. The enzyme catalyses N(4)-(alpha-D-Man-(1-&gt;2)-alpha-D-Man-(1-&gt;2)-alpha-D-Man-(1-&gt;3)-[alpha-D-Man-(1-&gt;3)-[alpha-D-Man-(1-&gt;2)-alpha-D-Man-(1-&gt;6)]-alpha-D-Man-(1-&gt;6)]-beta-D-Man-(1-&gt;4)-beta-D-GlcNAc-(1-&gt;4)-beta-D-GlcNAc)-L-asparaginyl-[protein] (N-glucan mannose isomer 8A1,2,3B1,3) + 3 H2O = N(4)-(alpha-D-Man-(1-&gt;3)-[alpha-D-Man-(1-&gt;3)-[alpha-D-Man-(1-&gt;6)]-alpha-D-Man-(1-&gt;6)]-beta-D-Man-(1-&gt;4)-beta-D-GlcNAc-(1-&gt;4)-beta-D-GlcNAc)-L-asparaginyl-[protein] (N-glucan mannose isomer 5A1,2) + 3 beta-D-mannose. The protein operates within protein modification; protein glycosylation. Inhibited by both 1-deoxymannojirimycin and kifunensine. In terms of biological role, involved in the maturation of Asn-linked oligosaccharides. Progressively trim alpha-1,2-linked mannose residues from Man(9)GlcNAc(2) to produce Man(5)GlcNAc(2). This is Mannosyl-oligosaccharide 1,2-alpha-mannosidase IB (Man1a2) from Mus musculus (Mouse).